Here is a 202-residue protein sequence, read N- to C-terminus: Indolepyruvate oxidoreductase subunit IorB (202 aa).

As to quaternary structure, heterodimer of the IorA and IorB subunits.

The catalysed reaction is indole-3-pyruvate + 2 oxidized [2Fe-2S]-[ferredoxin] + CoA = (indol-3-yl)acetyl-CoA + 2 reduced [2Fe-2S]-[ferredoxin] + CO2 + H(+). Its function is as follows. Catalyzes the ferredoxin-dependent oxidative decarboxylation of arylpyruvates. This Pyrococcus horikoshii (strain ATCC 700860 / DSM 12428 / JCM 9974 / NBRC 100139 / OT-3) protein is Indolepyruvate oxidoreductase subunit IorB (iorB).